A 1299-amino-acid chain; its full sequence is Protein prickle (1299 aa).

Positions 1–19 (MSSLSTGGGAGGSSGGPGG) are enriched in gly residues. 5 disordered regions span residues 1–24 (MSSL…DAAA), 115–181 (ADDG…EVTQ), 241–289 (EEES…PQVP), 368–396 (LPRH…PSSS), and 425–527 (LPPH…DDDS). A compositionally biased stretch (basic residues) spans 145 to 159 (SPRRSKKLLRSLRAH). The span at 168–181 (NDTTTANESSEVTQ) shows a compositional bias: polar residues. Pro residues predominate over residues 263–272 (PVPPLPPPPA). Over residues 425-434 (LPPHHQQHPG) the composition is skewed to low complexity. A compositionally biased stretch (gly residues) spans 435–445 (AGMGPGPGSGA). Residues 457–469 (PGCSANPKYSNAQ) are compositionally biased toward polar residues. The PET domain maps to 515–623 (MDMQRQSHSD…NVRQLMSARP (109 aa)). Residues 516–525 (DMQRQSHSDD) are compositionally biased toward basic and acidic residues. 3 consecutive LIM zinc-binding domains span residues 622–686 (RPCD…ETLK), 687–747 (PRCS…MFAE), and 748–810 (YCDY…GEPP). 3 disordered regions span residues 807-865 (GEPP…HQAT), 902-940 (KDLE…GDFQ), and 1026-1249 (ADIL…SSSS). A compositionally biased stretch (low complexity) spans 844–864 (PSSHASSSPPMSPQQQQQHQA). 2 stretches are compositionally biased toward polar residues: residues 922–934 (RASS…SPLN) and 1070–1081 (SLNTPMSTQSAS). A compositionally biased stretch (low complexity) spans 1089-1101 (SILSGASSSSPMS). Positions 1136-1150 (GERERDRDKDKEGGG) are enriched in basic and acidic residues. A compositionally biased stretch (basic residues) spans 1151 to 1183 (RHGHGHSSRRRRRRKSSSSSSHHRSGSGHRSHS). A compositionally biased stretch (basic and acidic residues) spans 1216–1231 (SPSRQQRERERERERE). The span at 1238–1249 (VCSTCSSSSSSS) shows a compositional bias: low complexity.

It belongs to the prickle / espinas / testin family. In terms of assembly, interacts with dsh; PET and LIM domains interact with dsh DEP domain, in wing cells. Interacts with Vang in photoreceptor cells. In terms of tissue distribution, expressed in the wing, leg and eye imaginal disks. Expressed within the photoreceptors of the eye.

The protein localises to the cell membrane. In terms of biological role, acts in a planar cell polarity (PCP) complex; polarization along the apical/basal axis of epithelial cells. Correct expression of the alternative isoforms is required for PCP signaling in imaginal disks. PCP signaling in the wing disk requires the receptor fz and the cytoplasmic proteins dsh and pk. These act in a feedback loop leading to activation of the jnk cascade and subsequent polarized arrangement of hairs and bristles. Dgo and pk compete with one another for dsh binding, thereby modulating fz dsh activity and ensuring tight control over fz PCP signaling. Vang, stan and pk function together to regulate the establishment of tissue polarity in the adult eye. The protein is Protein prickle of Drosophila melanogaster (Fruit fly).